The primary structure comprises 103 residues: Large ribosomal subunit protein uL24 (103 aa).

The protein belongs to the universal ribosomal protein uL24 family. As to quaternary structure, part of the 50S ribosomal subunit.

Functionally, one of two assembly initiator proteins, it binds directly to the 5'-end of the 23S rRNA, where it nucleates assembly of the 50S subunit. Its function is as follows. One of the proteins that surrounds the polypeptide exit tunnel on the outside of the subunit. This Rhizobium meliloti (strain 1021) (Ensifer meliloti) protein is Large ribosomal subunit protein uL24.